The following is a 143-amino-acid chain: Peptide methionine sulfoxide reductase MsrB (143 aa).

The region spanning 16 to 139 (DAELRRRLTP…NSAALNFEAK (124 aa)) is the MsrB domain. 4 residues coordinate Zn(2+): C55, C58, C104, and C107. The Nucleophile role is filled by C128.

The protein belongs to the MsrB Met sulfoxide reductase family. Zn(2+) is required as a cofactor.

It catalyses the reaction L-methionyl-[protein] + [thioredoxin]-disulfide + H2O = L-methionyl-(R)-S-oxide-[protein] + [thioredoxin]-dithiol. In Burkholderia thailandensis (strain ATCC 700388 / DSM 13276 / CCUG 48851 / CIP 106301 / E264), this protein is Peptide methionine sulfoxide reductase MsrB.